The sequence spans 260 residues: MTKTPPAPEPDVLFGATDERQFIPQQQTPAAAPAPAEDAHYHGHRDRLRARYREYGDAALADYEILELILFRLIPRRDTKPIAKALLARFGTLAGVFGAPLHLLHEVKGVKESVALDLKLVATASHRMLKSELRNKQVLSSWSAVIDYCHAAMAHETKEQFRILFLDKRNTLIADEVQQQGTIDHTPVYPREVVKRALELSATALILVHNHPSGDPTPSCADIEMTKLIAEAAKPLGIALHDHVIIGKDGHVSLKGLQLF.

The 123-residue stretch at 138-260 (VLSSWSAVID…HVSLKGLQLF (123 aa)) folds into the MPN domain. Residues His209, His211, and Asp222 each coordinate Zn(2+). Positions 209–222 (HNHPSGDPTPSCAD) match the JAMM motif motif.

It belongs to the UPF0758 family.

The polypeptide is UPF0758 protein Smed_1459 (Sinorhizobium medicae (strain WSM419) (Ensifer medicae)).